The sequence spans 108 residues: Replication restart protein PriB (108 aa).

The region spanning 8-108 is the SSB domain; sequence VDNRFSLIGK…LHAEQIEFIE (101 aa).

It belongs to the PriB family. Homodimer. Interacts with PriA and DnaT. Component of the replication restart primosome. Primosome assembly occurs via a 'hand-off' mechanism. PriA binds to replication forks, subsequently PriB then DnaT bind; DnaT then displaces ssDNA to generate the helicase loading substrate.

Its function is as follows. Involved in the restart of stalled replication forks, which reloads the replicative helicase on sites other than the origin of replication; the PriA-PriB pathway is the major replication restart pathway. During primosome assembly it facilitates complex formation between PriA and DnaT on DNA; stabilizes PriA on DNA. Stimulates the DNA unwinding activity of PriA helicase. The chain is Replication restart protein PriB from Histophilus somni (strain 2336) (Haemophilus somnus).